The chain runs to 172 residues: Endoribonuclease YbeY (172 aa).

Histidine 136, histidine 140, and histidine 146 together coordinate Zn(2+).

Belongs to the endoribonuclease YbeY family. It depends on Zn(2+) as a cofactor.

Its subcellular location is the cytoplasm. Single strand-specific metallo-endoribonuclease involved in late-stage 70S ribosome quality control and in maturation of the 3' terminus of the 16S rRNA. The polypeptide is Endoribonuclease YbeY (Rickettsia canadensis (strain McKiel)).